A 374-amino-acid chain; its full sequence is GDSL esterase/lipase At1g71250 (374 aa).

The N-terminal stretch at 1–28 (MNTNRKKMKVHIGGYVLILALTVSVILQ) is a signal peptide. Catalysis depends on S48, which acts as the Nucleophile. N-linked (GlcNAc...) asparagine glycosylation is present at N162. Residues D338 and H341 contribute to the active site.

Belongs to the 'GDSL' lipolytic enzyme family.

It is found in the secreted. This is GDSL esterase/lipase At1g71250 from Arabidopsis thaliana (Mouse-ear cress).